Reading from the N-terminus, the 349-residue chain is tRNA pseudouridine synthase D (349 aa).

Phenylalanine 27 contacts substrate. The active-site Nucleophile is aspartate 80. Asparagine 129 lines the substrate pocket. Residues 155–303 form the TRUD domain; sequence GVPNYFGAQR…VEAARRAMLL (149 aa). Residue phenylalanine 329 participates in substrate binding.

This sequence belongs to the pseudouridine synthase TruD family.

The catalysed reaction is uridine(13) in tRNA = pseudouridine(13) in tRNA. Its function is as follows. Responsible for synthesis of pseudouridine from uracil-13 in transfer RNAs. The protein is tRNA pseudouridine synthase D of Shigella sonnei (strain Ss046).